The chain runs to 125 residues: Snaclec B6 (125 aa).

3 cysteine pairs are disulfide-bonded: Cys2–Cys13, Cys30–Cys119, and Cys96–Cys111. The C-type lectin domain occupies 9–120 (HEGHCYKVFK…CNISQYFVCQ (112 aa)). Residue Asn95 is glycosylated (N-linked (GlcNAc...) asparagine). Residue Asn112 is glycosylated (N-linked (GlcNAc...) asparagine).

Belongs to the snaclec family. In terms of assembly, heterodimer; disulfide-linked. As to expression, expressed by the venom gland.

It is found in the secreted. Functionally, interferes with one step of hemostasis (modulation of platelet aggregation, or coagulation cascade, for example). The chain is Snaclec B6 from Macrovipera lebetinus (Levantine viper).